The following is a 372-amino-acid chain: Ephrin type-A receptor 8 (372 aa).

One can recognise a Protein kinase domain in the interval 2 to 263 (IHIEKIIGSG…HVVSVLEALV (262 aa)). Residues 8–16 (IGSGESGEV) and K34 contribute to the ATP site. The active-site Proton acceptor is D127. Y206 is subject to Phosphotyrosine; by autocatalysis. Residues 297–372 (NGDLTVGDWL…SCTQGPRRHL (76 aa)) enclose the SAM domain. The short motif at 370–372 (RHL) is the PDZ-binding element.

As to quaternary structure, heterotetramer upon binding of the ligand. The heterotetramer is composed of an ephrin dimer and a receptor dimer. Oligomerization is probably required to induce biological responses. May also form heterodimers with other ephrin receptors. Interacts with FYN; possible downstream effector of EPHA8 in regulation of cell adhesion. Interacts with PIK3CG; regulates integrin-mediated cell adhesion to substrate. Interacts with TIAM1; regulates clathrin-mediated endocytosis of EPHA8. Interacts with ANKS1A and ANKS1B; EPHA8 kinase activity-independent but stimulated by EPHA8 ubiquitination. Post-translationally, phosphorylated. Phosphorylation is stimulated upon binding of its ligands including EFNA2, EFNA3 and EFNA5. Autophosphorylation on Tyr-206 modulates tyrosine kinase activity. In terms of processing, ubiquitinated. Ubiquitination by CBL regulates the receptor stability and activity through proteasomal degradation. ANKS1A prevents ubiquitination and degradation. As to expression, most abundant in brain.

The protein localises to the cell membrane. The protein resides in the cell projection. It localises to the early endosome membrane. The enzyme catalyses L-tyrosyl-[protein] + ATP = O-phospho-L-tyrosyl-[protein] + ADP + H(+). Its function is as follows. Receptor tyrosine kinase which binds promiscuously GPI-anchored ephrin-A family ligands residing on adjacent cells, leading to contact-dependent bidirectional signaling into neighboring cells. The signaling pathway downstream of the receptor is referred to as forward signaling while the signaling pathway downstream of the ephrin ligand is referred to as reverse signaling. The GPI-anchored ephrin-A EFNA2, EFNA3, and EFNA5 are able to activate EPHA8 through phosphorylation. With EFNA5 may regulate integrin-mediated cell adhesion and migration on fibronectin substrate but also neurite outgrowth. During development of the nervous system also plays a role in axon guidance. Downstream effectors of the EPHA8 signaling pathway include FYN which promotes cell adhesion upon activation by EPHA8 and the MAP kinases in the stimulation of neurite outgrowth. This chain is Ephrin type-A receptor 8 (Epha8), found in Rattus norvegicus (Rat).